A 486-amino-acid polypeptide reads, in one-letter code: Catalase (486 aa).

The interval 1–28 (MENKKLTAANGRPIADNQNSQTAGPRGP) is disordered. Active-site residues include His54 and Asn127. Tyr337 is a heme binding site.

Belongs to the catalase family. As to quaternary structure, homodimer. The cofactor is heme.

It catalyses the reaction 2 H2O2 = O2 + 2 H2O. Functionally, decomposes hydrogen peroxide into water and oxygen; serves to protect cells from the toxic effects of hydrogen peroxide. May be involved in aerotolerance of B.fragilis. The sequence is that of Catalase (katA) from Bacteroides fragilis (strain YCH46).